We begin with the raw amino-acid sequence, 200 residues long: Holliday junction resolvase RecU (200 aa).

Positions 82, 84, 97, and 116 each coordinate Mg(2+).

Belongs to the RecU family. Mg(2+) is required as a cofactor.

It localises to the cytoplasm. It carries out the reaction Endonucleolytic cleavage at a junction such as a reciprocal single-stranded crossover between two homologous DNA duplexes (Holliday junction).. Endonuclease that resolves Holliday junction intermediates in genetic recombination. Cleaves mobile four-strand junctions by introducing symmetrical nicks in paired strands. Promotes annealing of linear ssDNA with homologous dsDNA. Required for DNA repair, homologous recombination and chromosome segregation. This Streptococcus gordonii (strain Challis / ATCC 35105 / BCRC 15272 / CH1 / DL1 / V288) protein is Holliday junction resolvase RecU.